The sequence spans 444 residues: Phosphoglucosamine mutase (444 aa).

The active-site Phosphoserine intermediate is serine 100. 4 residues coordinate Mg(2+): serine 100, aspartate 240, aspartate 242, and aspartate 244. Residue serine 100 is modified to Phosphoserine.

It belongs to the phosphohexose mutase family. Mg(2+) is required as a cofactor. In terms of processing, activated by phosphorylation.

It catalyses the reaction alpha-D-glucosamine 1-phosphate = D-glucosamine 6-phosphate. Catalyzes the conversion of glucosamine-6-phosphate to glucosamine-1-phosphate. The sequence is that of Phosphoglucosamine mutase from Desulforamulus reducens (strain ATCC BAA-1160 / DSM 100696 / MI-1) (Desulfotomaculum reducens).